The primary structure comprises 645 residues: 1-deoxy-D-xylulose-5-phosphate synthase (645 aa).

Residues histidine 83 and 124 to 126 (GHS) each bind thiamine diphosphate. Aspartate 155 is a Mg(2+) binding site. Residues 156-157 (GS), asparagine 184, tyrosine 295, and glutamate 376 contribute to the thiamine diphosphate site. Position 184 (asparagine 184) interacts with Mg(2+).

The protein belongs to the transketolase family. DXPS subfamily. Homodimer. It depends on Mg(2+) as a cofactor. Thiamine diphosphate serves as cofactor.

It carries out the reaction D-glyceraldehyde 3-phosphate + pyruvate + H(+) = 1-deoxy-D-xylulose 5-phosphate + CO2. It participates in metabolic intermediate biosynthesis; 1-deoxy-D-xylulose 5-phosphate biosynthesis; 1-deoxy-D-xylulose 5-phosphate from D-glyceraldehyde 3-phosphate and pyruvate: step 1/1. In terms of biological role, catalyzes the acyloin condensation reaction between C atoms 2 and 3 of pyruvate and glyceraldehyde 3-phosphate to yield 1-deoxy-D-xylulose-5-phosphate (DXP). In Desulfotalea psychrophila (strain LSv54 / DSM 12343), this protein is 1-deoxy-D-xylulose-5-phosphate synthase.